Consider the following 512-residue polypeptide: Nuclear fusion protein FUS1 (512 aa).

The chain crosses the membrane as a helical span at residues 72-96 (IGLSIGLPIGIFCFGLLILLCYFYL). The tract at residues 97–512 (KRNSVSISNP…VPGDCLQEYD (416 aa)) is hydrophilic. Position 178 is a phosphothreonine (Thr178). A phosphoserine mark is found at Ser190 and Ser256. Thr281 and Thr424 each carry phosphothreonine. The SH3 domain maps to 436–512 (QLGKTYTVIQ…VPGDCLQEYD (77 aa)).

O-glycosylated.

Its subcellular location is the membrane. Functionally, required for cell fusion. Negatively regulates Sho1p signaling to ensure efficient cell fusion. Its function is as follows. Interacts with SHO1. This Saccharomyces cerevisiae (strain ATCC 204508 / S288c) (Baker's yeast) protein is Nuclear fusion protein FUS1 (FUS1).